We begin with the raw amino-acid sequence, 282 residues long: Acetyl-coenzyme A carboxylase carboxyl transferase subunit beta (282 aa).

The 254-residue stretch at 29–282 folds into the CoA carboxyltransferase N-terminal domain; sequence LWRTCPKCQR…LMKYGGKQND (254 aa). Zn(2+) contacts are provided by Cys33, Cys36, Cys51, and Cys54. Residues 33–54 form a C4-type zinc finger; it reads CPKCQRTLFAAQMDEYATCPGC.

Belongs to the AccD/PCCB family. In terms of assembly, acetyl-CoA carboxylase is a heterohexamer composed of biotin carboxyl carrier protein (AccB), biotin carboxylase (AccC) and two subunits each of ACCase subunit alpha (AccA) and ACCase subunit beta (AccD). Requires Zn(2+) as cofactor.

The protein localises to the cytoplasm. It carries out the reaction N(6)-carboxybiotinyl-L-lysyl-[protein] + acetyl-CoA = N(6)-biotinyl-L-lysyl-[protein] + malonyl-CoA. It functions in the pathway lipid metabolism; malonyl-CoA biosynthesis; malonyl-CoA from acetyl-CoA: step 1/1. Its function is as follows. Component of the acetyl coenzyme A carboxylase (ACC) complex. Biotin carboxylase (BC) catalyzes the carboxylation of biotin on its carrier protein (BCCP) and then the CO(2) group is transferred by the transcarboxylase to acetyl-CoA to form malonyl-CoA. This chain is Acetyl-coenzyme A carboxylase carboxyl transferase subunit beta, found in Limosilactobacillus fermentum (strain NBRC 3956 / LMG 18251) (Lactobacillus fermentum).